The sequence spans 105 residues: Mini zinc finger protein 1 (105 aa).

Positions 1-29 (MGPQQDRSAAKPYANGSTAAAAAAGRKEN) are disordered. The ZF-HD dimerization-type; degenerate zinc finger occupies 35–84 (YRECQRNHAASIGGHAVDGCREFMASGAEGTAAALLCAACGCHRSFHRRE).

Homo- and heterodimers.

The protein localises to the cytoplasm. In terms of biological role, inhibits zinc finger homeodomain (ZHD) transcription factors, by interacting with them to prevent both their nuclear localization and their DNA-binding properties. This chain is Mini zinc finger protein 1 (MIF1), found in Oryza sativa subsp. indica (Rice).